Reading from the N-terminus, the 329-residue chain is Quinolinate synthase (329 aa).

Iminosuccinate is bound by residues His-44 and Ser-61. Residue Cys-106 participates in [4Fe-4S] cluster binding. Iminosuccinate contacts are provided by residues 132–134 and Ser-149; that span reads YIN. Cys-192 is a [4Fe-4S] cluster binding site. Residues 218-220 and Thr-235 each bind iminosuccinate; that span reads HPE. [4Fe-4S] cluster is bound at residue Cys-285.

It belongs to the quinolinate synthase family. Type 2 subfamily. [4Fe-4S] cluster is required as a cofactor.

The protein localises to the plastid. It localises to the cyanelle. The catalysed reaction is iminosuccinate + dihydroxyacetone phosphate = quinolinate + phosphate + 2 H2O + H(+). Its pathway is cofactor biosynthesis; NAD(+) biosynthesis; quinolinate from iminoaspartate: step 1/1. Its function is as follows. Catalyzes the condensation of iminoaspartate with dihydroxyacetone phosphate to form quinolinate. In Cyanophora paradoxa, this protein is Quinolinate synthase.